A 388-amino-acid chain; its full sequence is MNLHEYQAKQLFARSGLPTPVGYACSTPREAEEAASKIGSGPWVVKCQVHAGGRGKAGGVKVVKSKEEIRAFAEHWLGKRLVTYQTDANGQPVNQILVEAATDIAKELYLGAVVDRGSRRVVFMASTEGGVEIEKVAEETPHLIHKVAIDPLTGPMPYQGRELAFKLGLEGKLVQQFTKVFMGLANIFLERDLALIEINPLVITSQGDLICLDGKLGADGNALFRQPDLREMRDQSQEDPREAQAAQWELNYVALDGNIGCMVNGAGLAMGTMDIVKLHGGEPANFLDVGGGATKERVTEAFKIILSDDKVKAVLVNIFGGIVRCDLIADGIIGAVAEVGVNVPVVVRLEGNNAELGAKKLADSGLNIIAAKSLTDAAQQVVAAVEGK.

The ATP-grasp domain maps to 9–244 (KQLFARSGLP…QSQEDPREAQ (236 aa)). ATP is bound by residues Lys46, 53–55 (GRG), Glu99, Thr102, and Glu107. Asn199 and Asp213 together coordinate Mg(2+). Substrate contacts are provided by residues Asn264 and 321–323 (GIV).

Belongs to the succinate/malate CoA ligase beta subunit family. In terms of assembly, heterotetramer of two alpha and two beta subunits. The cofactor is Mg(2+).

It carries out the reaction succinate + ATP + CoA = succinyl-CoA + ADP + phosphate. The enzyme catalyses GTP + succinate + CoA = succinyl-CoA + GDP + phosphate. Its pathway is carbohydrate metabolism; tricarboxylic acid cycle; succinate from succinyl-CoA (ligase route): step 1/1. Succinyl-CoA synthetase functions in the citric acid cycle (TCA), coupling the hydrolysis of succinyl-CoA to the synthesis of either ATP or GTP and thus represents the only step of substrate-level phosphorylation in the TCA. The beta subunit provides nucleotide specificity of the enzyme and binds the substrate succinate, while the binding sites for coenzyme A and phosphate are found in the alpha subunit. The sequence is that of Succinate--CoA ligase [ADP-forming] subunit beta from Cronobacter sakazakii (strain ATCC BAA-894) (Enterobacter sakazakii).